A 339-amino-acid chain; its full sequence is N-acetyl-gamma-glutamyl-phosphate reductase (339 aa).

Residue Cys145 is part of the active site.

The protein belongs to the NAGSA dehydrogenase family. Type 1 subfamily.

It is found in the cytoplasm. The enzyme catalyses N-acetyl-L-glutamate 5-semialdehyde + phosphate + NADP(+) = N-acetyl-L-glutamyl 5-phosphate + NADPH + H(+). Its pathway is amino-acid biosynthesis; L-arginine biosynthesis; N(2)-acetyl-L-ornithine from L-glutamate: step 3/4. In terms of biological role, catalyzes the NADPH-dependent reduction of N-acetyl-5-glutamyl phosphate to yield N-acetyl-L-glutamate 5-semialdehyde. This is N-acetyl-gamma-glutamyl-phosphate reductase from Thermotoga maritima (strain ATCC 43589 / DSM 3109 / JCM 10099 / NBRC 100826 / MSB8).